The primary structure comprises 345 residues: Erythronate-4-phosphate dehydrogenase (345 aa).

Position 45 (serine 45) interacts with substrate. 2 residues coordinate NAD(+): aspartate 146 and threonine 174. Arginine 207 is an active-site residue. Residue aspartate 227 coordinates NAD(+). The active site involves glutamate 232. Histidine 249 serves as the catalytic Proton donor. Glycine 252 provides a ligand contact to NAD(+).

It belongs to the D-isomer specific 2-hydroxyacid dehydrogenase family. PdxB subfamily. Homodimer.

The protein localises to the cytoplasm. The enzyme catalyses 4-phospho-D-erythronate + NAD(+) = (R)-3-hydroxy-2-oxo-4-phosphooxybutanoate + NADH + H(+). Its pathway is cofactor biosynthesis; pyridoxine 5'-phosphate biosynthesis; pyridoxine 5'-phosphate from D-erythrose 4-phosphate: step 2/5. In terms of biological role, catalyzes the oxidation of erythronate-4-phosphate to 3-hydroxy-2-oxo-4-phosphonooxybutanoate. The chain is Erythronate-4-phosphate dehydrogenase from Ruthia magnifica subsp. Calyptogena magnifica.